A 502-amino-acid polypeptide reads, in one-letter code: ATP synthase subunit alpha (502 aa).

Gly169 to Thr176 provides a ligand contact to ATP.

Belongs to the ATPase alpha/beta chains family. As to quaternary structure, F-type ATPases have 2 components, CF(1) - the catalytic core - and CF(0) - the membrane proton channel. CF(1) has five subunits: alpha(3), beta(3), gamma(1), delta(1), epsilon(1). CF(0) has three main subunits: a(1), b(2) and c(9-12). The alpha and beta chains form an alternating ring which encloses part of the gamma chain. CF(1) is attached to CF(0) by a central stalk formed by the gamma and epsilon chains, while a peripheral stalk is formed by the delta and b chains.

It localises to the cell membrane. The enzyme catalyses ATP + H2O + 4 H(+)(in) = ADP + phosphate + 5 H(+)(out). Produces ATP from ADP in the presence of a proton gradient across the membrane. The alpha chain is a regulatory subunit. The protein is ATP synthase subunit alpha of Bacillus sp. (strain PS3).